The chain runs to 129 residues: uncharacterized protein (129 aa).

The first 20 residues, 1–20, serve as a signal peptide directing secretion; that stretch reads MIYPLFRICILGAFLLGSYA.

This is an uncharacterized protein from Saccharomyces cerevisiae (strain ATCC 204508 / S288c) (Baker's yeast).